Here is a 180-residue protein sequence, read N- to C-terminus: NADH-quinone oxidoreductase subunit I (180 aa).

2 4Fe-4S ferredoxin-type domains span residues Leu50 to Ala80 and Glu90 to Asp119. Positions 60, 63, 66, 70, 99, 102, 105, and 109 each coordinate [4Fe-4S] cluster.

This sequence belongs to the complex I 23 kDa subunit family. In terms of assembly, NDH-1 is composed of 13 different subunits. Subunits NuoA, H, J, K, L, M, N constitute the membrane sector of the complex. It depends on [4Fe-4S] cluster as a cofactor.

It is found in the cell inner membrane. It catalyses the reaction a quinone + NADH + 5 H(+)(in) = a quinol + NAD(+) + 4 H(+)(out). Functionally, NDH-1 shuttles electrons from NADH, via FMN and iron-sulfur (Fe-S) centers, to quinones in the respiratory chain. The immediate electron acceptor for the enzyme in this species is believed to be ubiquinone. Couples the redox reaction to proton translocation (for every two electrons transferred, four hydrogen ions are translocated across the cytoplasmic membrane), and thus conserves the redox energy in a proton gradient. This chain is NADH-quinone oxidoreductase subunit I, found in Yersinia pseudotuberculosis serotype O:1b (strain IP 31758).